The chain runs to 546 residues: Chaperonin GroEL (546 aa).

ATP-binding positions include Thr30–Pro33, Lys51, Asp87–Thr91, Gly415, and Asp497. Positions Pro527–Phe546 are disordered. Gly residues predominate over residues Pro537–Phe546.

This sequence belongs to the chaperonin (HSP60) family. As to quaternary structure, forms a cylinder of 14 subunits composed of two heptameric rings stacked back-to-back. Interacts with the co-chaperonin GroES.

The protein localises to the cytoplasm. It catalyses the reaction ATP + H2O + a folded polypeptide = ADP + phosphate + an unfolded polypeptide.. Functionally, together with its co-chaperonin GroES, plays an essential role in assisting protein folding. The GroEL-GroES system forms a nano-cage that allows encapsulation of the non-native substrate proteins and provides a physical environment optimized to promote and accelerate protein folding. The chain is Chaperonin GroEL from Methylorubrum populi (strain ATCC BAA-705 / NCIMB 13946 / BJ001) (Methylobacterium populi).